The chain runs to 121 residues: Large ribosomal subunit protein bL20 (121 aa).

Belongs to the bacterial ribosomal protein bL20 family.

Binds directly to 23S ribosomal RNA and is necessary for the in vitro assembly process of the 50S ribosomal subunit. It is not involved in the protein synthesizing functions of that subunit. The protein is Large ribosomal subunit protein bL20 of Ruegeria sp. (strain TM1040) (Silicibacter sp.).